The chain runs to 196 residues: CASP-like protein 1D1 (196 aa).

Residues 1-18 are compositionally biased toward basic and acidic residues; it reads MASTDKPDRESIKSEEAP. The tract at residues 1–22 is disordered; sequence MASTDKPDRESIKSEEAPAAHP. Topologically, residues 1–29 are cytoplasmic; it reads MASTDKPDRESIKSEEAPAAHPRRSNYSS. A helical transmembrane segment spans residues 30–50; sequence VHVALRFLLFAASVTAVVVMV. Residues 51–84 are Extracellular-facing; sequence TAKQTKIVPVPGLPISVPLEAKFSDSPAFLYFIS. A helical membrane pass occupies residues 85–105; sequence ALSVAGLYGILTTLAAISIVL. Over 106 to 112 the chain is Cytoplasmic; it reads KPAYATR. Residues 113–133 traverse the membrane as a helical segment; the sequence is FLLHFALLDVLMLGIVASATG. At 134–167 the chain is on the extracellular side; that stretch reads AAGGVAYVGLKGNSHVRWGKVCNVYDKFCQHVGS. A helical membrane pass occupies residues 168-188; that stretch reads SIAVALFASVLLVLLTMLSVF. Topologically, residues 189–196 are cytoplasmic; it reads SIYRKIPK.

It belongs to the Casparian strip membrane proteins (CASP) family. As to quaternary structure, homodimer and heterodimers.

The protein resides in the cell membrane. The polypeptide is CASP-like protein 1D1 (Populus trichocarpa (Western balsam poplar)).